The primary structure comprises 241 residues: Deoxynucleotide monophosphate kinase (241 aa).

Residue lysine 10 participates in dGMP binding. ATP-binding residues include arginine 11, glycine 13, aspartate 15, and threonine 16. Positions 36 and 37 each coordinate dGMP. Tyrosine 42 is a binding site for Mg(2+). A dGMP-binding site is contributed by arginine 68. Positions 85 and 108 each coordinate Mg(2+). DGMP-binding residues include arginine 132, glycine 139, threonine 140, valine 144, tryptophan 152, aspartate 175, arginine 177, glutamine 178, glutamate 181, and threonine 208.

This sequence belongs to the dNMP kinase family. Homodimer. Mg(2+) serves as cofactor.

The enzyme catalyses dTMP + ATP = dTDP + ADP. The catalysed reaction is dGMP + ATP = dGDP + ADP. It carries out the reaction 5-hydroxymethyl-dCMP + ATP = 5-hydroxymethyl-dCDP + ADP. Its activity is regulated as follows. Inhibited by pyridoxal 5'-phosphate and diethylpyrocarbonate. Functionally, allows the synthesis of deoxyribonucleoside triphosphates necessary for the rapid viral DNA replication. Phosphorylates dGMP, dTMP and 5-hydroxymethyl-dCMP (hmdCMP) while excluding dCMP and dAMP. The phosphorylation of 5-hydroxymethyl-dCMP represents the first step in the replacement of cytosine by hydroxymethylcytosine in new viral DNA genomes. The polypeptide is Deoxynucleotide monophosphate kinase (1) (Enterobacteria phage T4 (Bacteriophage T4)).